A 137-amino-acid polypeptide reads, in one-letter code: Large ribosomal subunit protein eL28 (137 aa).

N-acetylserine is present on Ser-2. Glycyl lysine isopeptide (Lys-Gly) (interchain with G-Cter in SUMO2) cross-links involve residues Lys-58 and Lys-65. Phosphoserine is present on Ser-115.

It belongs to the eukaryotic ribosomal protein eL28 family. As to quaternary structure, component of the large ribosomal subunit.

The protein resides in the cytoplasm. Functionally, component of the large ribosomal subunit. The ribosome is a large ribonucleoprotein complex responsible for the synthesis of proteins in the cell. The protein is Large ribosomal subunit protein eL28 (Rpl28) of Rattus norvegicus (Rat).